The chain runs to 1647 residues: Putative RNA exonuclease pqe-1 (1647 aa).

4 disordered regions span residues 1–199 (MFNG…QVQN), 274–393 (QTPA…TSLP), 515–619 (MMQQ…KPVI), and 641–665 (QVKQEIPEVSSTSDATKSDAAPTAR). Composition is skewed to low complexity over residues 30–64 (GPSQNAQQQQQQASAPGTSSGGPSQAVSGASSGAS) and 99–131 (TQPQQRQQQQSQPQARQMSTQQAANLRKNAAAA). Positions 143-170 (SREQGNAHQPTAGQIPQSSNQPAQQTHN) are enriched in polar residues. Composition is skewed to low complexity over residues 274-297 (QTPARGRPANAQLAQNAQQRNPQQ) and 515-526 (MMQQQAMQMQMQ). The span at 527–540 (NPPPVHQQPPPQQP) shows a compositional bias: pro residues. Residues 541 to 555 (PQQQRQKQQRSQPAP) are compositionally biased toward low complexity. Basic and acidic residues predominate over residues 592 to 601 (SKIEPVDVKP). The span at 650–664 (SSTSDATKSDAAPTA) shows a compositional bias: low complexity. A coiled-coil region spans residues 686-726 (SAKKFERMKAEAEDKEDMKKKIAALQEALFNIQEERRVEKE). The segment covering 736–756 (AVPQNQPASSVQIAQVSTSES) has biased composition (polar residues). The interval 736–1174 (AVPQNQPASS…LRNKKHTTEE (439 aa)) is disordered. The segment covering 761–772 (TSEAAATETMTS) has biased composition (low complexity). Residues 783–793 (TEGEQEEDEDE) are compositionally biased toward acidic residues. Residues 822–833 (RSDEKREKRHVS) show a composition bias toward basic and acidic residues. Positions 878–905 (DNEDDDADSFVVGDDEPIEYEEEDEDDM) are enriched in acidic residues. Low complexity predominate over residues 977–992 (TPTASSSMSSSTLSYC). Over residues 1018–1031 (KTREENRERKRLAQ) the composition is skewed to basic and acidic residues. Residues 1038-1054 (SETTGVRRTLRSTQDNS) are compositionally biased toward polar residues. Basic and acidic residues-rich tracts occupy residues 1076–1088 (AKSSENRAKEKQK) and 1139–1174 (NHTEMLDKRNKESEEKRRKDRDELERLRNKKHTTEE). Positions 1142–1187 (EMLDKRNKESEEKRRKDRDELERLRNKKHTTEEEKIKMARLQNALK) form a coiled coil. Positions 1477–1637 (RVYALDCEMV…IFYGLRNPES (161 aa)) constitute an Exonuclease domain.

The protein belongs to the REXO1/REXO3 family. As to expression, expressed in the excretory canal, vulval cells, the intestine and in head and tail neurons including ASH, RIC and AIZ neurons.

It is found in the nucleus. Functionally, putative RNA exonuclease which protects neurons from the toxic effects of expanded poly-Q disease proteins. It is unknown whether this is via participation in the pathogenic mechanism underlying poly-Q-induced neurodegeneration or if it is by acting as a genetic modifier of the age of onset or progression of neurodegeneration. Regulates gene expression in neurons. This is Putative RNA exonuclease pqe-1 from Caenorhabditis elegans.